Here is a 419-residue protein sequence, read N- to C-terminus: Gamma-glutamyl phosphate reductase (419 aa).

Belongs to the gamma-glutamyl phosphate reductase family.

The protein localises to the cytoplasm. It carries out the reaction L-glutamate 5-semialdehyde + phosphate + NADP(+) = L-glutamyl 5-phosphate + NADPH + H(+). It participates in amino-acid biosynthesis; L-proline biosynthesis; L-glutamate 5-semialdehyde from L-glutamate: step 2/2. In terms of biological role, catalyzes the NADPH-dependent reduction of L-glutamate 5-phosphate into L-glutamate 5-semialdehyde and phosphate. The product spontaneously undergoes cyclization to form 1-pyrroline-5-carboxylate. This Mannheimia succiniciproducens (strain KCTC 0769BP / MBEL55E) protein is Gamma-glutamyl phosphate reductase.